Here is a 260-residue protein sequence, read N- to C-terminus: Phosphate import ATP-binding protein PstB 1 (260 aa).

The region spanning Ile-13–Ile-255 is the ABC transporter domain. Gly-45–Ser-52 contributes to the ATP binding site.

It belongs to the ABC transporter superfamily. Phosphate importer (TC 3.A.1.7) family. As to quaternary structure, the complex is composed of two ATP-binding proteins (PstB), two transmembrane proteins (PstC and PstA) and a solute-binding protein (PstS).

It is found in the cell inner membrane. The catalysed reaction is phosphate(out) + ATP + H2O = ADP + 2 phosphate(in) + H(+). In terms of biological role, part of the ABC transporter complex PstSACB involved in phosphate import. Responsible for energy coupling to the transport system. This chain is Phosphate import ATP-binding protein PstB 1, found in Paramagnetospirillum magneticum (strain ATCC 700264 / AMB-1) (Magnetospirillum magneticum).